Here is a 361-residue protein sequence, read N- to C-terminus: Peptidyl-prolyl cis-trans isomerase CYP40 (361 aa).

Residues 7 to 172 (FMDISIGGEL…QDVVIHDCGE (166 aa)) form the PPIase cyclophilin-type domain. 2 TPR repeats span residues 212 to 245 (VDFVKAHGNEHFKKQDYKMALRKYRKALRYLDIC) and 298 to 331 (VKALFRQGQAYMALNNVDAAAESLEKALQFEPND).

The protein belongs to the cyclophilin-type PPIase family. In terms of tissue distribution, expressed at low levels in seedlings, roots, shoots, leaves, stems, inflorescences, flowers and siliques, with highest levels dividing tissues.

It localises to the cytoplasm. It catalyses the reaction [protein]-peptidylproline (omega=180) = [protein]-peptidylproline (omega=0). Its activity is regulated as follows. Binds cyclosporin A (CsA). CsA mediates some of its effects via an inhibitory action on PPIase. In terms of biological role, PPIases accelerate the folding of proteins. It catalyzes the cis-trans isomerization of proline imidic peptide bonds in oligopeptides. Involved in promoting the expression of the juvenile phase of vegetative development, and, to a lower extent, in regulating the positioning of floral buds, floral morphogenesis and the expression of HSPs. Collaboratively with RBL and ULT1, influences floral meristem (FM) determinacy in an AGAMOUS and SUPERMAN-dependent manner, thus contributing to the floral developmental homeostasis. This Arabidopsis thaliana (Mouse-ear cress) protein is Peptidyl-prolyl cis-trans isomerase CYP40.